The sequence spans 216 residues: Protein-L-isoaspartate O-methyltransferase (216 aa).

Ser60 is an active-site residue.

Belongs to the methyltransferase superfamily. L-isoaspartyl/D-aspartyl protein methyltransferase family.

The protein resides in the cytoplasm. It carries out the reaction [protein]-L-isoaspartate + S-adenosyl-L-methionine = [protein]-L-isoaspartate alpha-methyl ester + S-adenosyl-L-homocysteine. In terms of biological role, catalyzes the methyl esterification of L-isoaspartyl residues in peptides and proteins that result from spontaneous decomposition of normal L-aspartyl and L-asparaginyl residues. It plays a role in the repair and/or degradation of damaged proteins. This chain is Protein-L-isoaspartate O-methyltransferase, found in Methanococcus aeolicus (strain ATCC BAA-1280 / DSM 17508 / OCM 812 / Nankai-3).